Here is a 144-residue protein sequence, read N- to C-terminus: Large ribosomal subunit protein uL16 (144 aa).

The span at 1 to 16 shows a compositional bias: basic residues; the sequence is MLVPKRVKHRKVQRGK. The interval 1-20 is disordered; it reads MLVPKRVKHRKVQRGKMRGE.

It belongs to the universal ribosomal protein uL16 family. As to quaternary structure, part of the 50S ribosomal subunit.

Functionally, binds 23S rRNA and is also seen to make contacts with the A and possibly P site tRNAs. This is Large ribosomal subunit protein uL16 from Limosilactobacillus fermentum (strain NBRC 3956 / LMG 18251) (Lactobacillus fermentum).